The chain runs to 406 residues: Zinc finger protein CONSTANS-LIKE 6 (406 aa).

Residues cysteine 17, cysteine 20, cysteine 40, and histidine 45 each contribute to the Zn(2+) site. A B box-type; atypical zinc finger spans residues 17 to 59 (CDSCVKRRARWYCAADDAFLCHACDGSVHSANPLARRHERVRL). The interval 63 to 95 (SAGKYRHASPPHQATWHQGFTRKARTPRGGKKS) is disordered. Basic residues predominate over residues 82-95 (FTRKARTPRGGKKS). Residues 357–399 (REARVSRYREKRRTRLFSKKIRYEVRKLNAEKRPRMKGRFVKR) enclose the CCT domain.

Belongs to the CONSTANS family.

It is found in the nucleus. In Arabidopsis thaliana (Mouse-ear cress), this protein is Zinc finger protein CONSTANS-LIKE 6 (COL6).